A 288-amino-acid chain; its full sequence is 4-diphosphocytidyl-2-C-methyl-D-erythritol kinase (288 aa).

Lys8 is an active-site residue. Pro90 to Ser100 lines the ATP pocket. The active site involves Asp132.

Belongs to the GHMP kinase family. IspE subfamily.

It carries out the reaction 4-CDP-2-C-methyl-D-erythritol + ATP = 4-CDP-2-C-methyl-D-erythritol 2-phosphate + ADP + H(+). It functions in the pathway isoprenoid biosynthesis; isopentenyl diphosphate biosynthesis via DXP pathway; isopentenyl diphosphate from 1-deoxy-D-xylulose 5-phosphate: step 3/6. Catalyzes the phosphorylation of the position 2 hydroxy group of 4-diphosphocytidyl-2C-methyl-D-erythritol. In Chlamydia trachomatis serovar L2b (strain UCH-1/proctitis), this protein is 4-diphosphocytidyl-2-C-methyl-D-erythritol kinase.